We begin with the raw amino-acid sequence, 97 residues long: Protein Vpr (97 aa).

The interval 1–42 (MEQAPENQGPAKEPFNEWALELLEELKAEAVRHFPRPWLHAL) is homooligomerization. Phosphoserine; by host is present on residues S79, S95, and S97.

It belongs to the HIV-1 VPR protein family. In terms of assembly, homooligomer, may form homodimer. Interacts with p6-gag region of the Pr55 Gag precursor protein through a (Leu-X-X)4 motif near the C-terminus of the P6gag protein. Interacts with host UNG. May interact with host RAD23A/HHR23A. Interacts with host VPRBP/DCAF1, leading to hijack the CUL4A-RBX1-DDB1-DCAF1/VPRBP complex, mediating ubiquitination of host proteins such as TERT and ZGPAT and arrest of the cell cycle in G2 phase. Post-translationally, phosphorylated on several residues by host. These phosphorylations regulate VPR activity for the nuclear import of the HIV-1 pre-integration complex.

It localises to the virion. The protein localises to the host nucleus. It is found in the host extracellular space. Functionally, during virus replication, may deplete host UNG protein, and incude G2-M cell cycle arrest. Acts by targeting specific host proteins for degradation by the 26S proteasome, through association with the cellular CUL4A-DDB1 E3 ligase complex by direct interaction with host VPRPB/DCAF-1. Cell cycle arrest reportedly occurs within hours of infection and is not blocked by antiviral agents, suggesting that it is initiated by the VPR carried into the virion. Additionally, VPR induces apoptosis in a cell cycle dependent manner suggesting that these two effects are mechanistically linked. Detected in the serum and cerebrospinal fluid of AIDS patient, VPR may also induce cell death to bystander cells. During virus entry, plays a role in the transport of the viral pre-integration (PIC) complex to the host nucleus. This function is crucial for viral infection of non-dividing macrophages. May act directly at the nuclear pore complex, by binding nucleoporins phenylalanine-glycine (FG)-repeat regions. The sequence is that of Protein Vpr from Human immunodeficiency virus type 1 group O (isolate ANT70) (HIV-1).